The sequence spans 121 residues: Small ribosomal subunit protein uS13 (121 aa).

Positions 95–121 are disordered; that stretch reads GLPVRGQKTKTNARTRKGKRKTVGAKS.

The protein belongs to the universal ribosomal protein uS13 family. As to quaternary structure, part of the 30S ribosomal subunit. Forms a loose heterodimer with protein S19. Forms two bridges to the 50S subunit in the 70S ribosome.

Located at the top of the head of the 30S subunit, it contacts several helices of the 16S rRNA. In the 70S ribosome it contacts the 23S rRNA (bridge B1a) and protein L5 of the 50S subunit (bridge B1b), connecting the 2 subunits; these bridges are implicated in subunit movement. Contacts the tRNAs in the A and P-sites. In Campylobacter jejuni subsp. jejuni serotype O:6 (strain 81116 / NCTC 11828), this protein is Small ribosomal subunit protein uS13.